Consider the following 317-residue polypeptide: Olfactory receptor 6Q1 (317 aa).

Over 1–27 the chain is Extracellular; sequence MQPYTKNWTQVTEFVMMGFAGIHEAHL. The N-linked (GlcNAc...) asparagine glycan is linked to N7. Residues 28-48 form a helical membrane-spanning segment; that stretch reads LFFILFLTMYLFTLVENLAII. Over 49–56 the chain is Cytoplasmic; that stretch reads LVVGLDHR. A helical transmembrane segment spans residues 57-77; the sequence is LRRPMYFFLTHLSCLEIWYTS. Topologically, residues 78–103 are extracellular; it reads VTVPKMLAGFIGVDGGKNISYADCLS. Residue N95 is glycosylated (N-linked (GlcNAc...) asparagine). C101 and C193 form a disulfide bridge. A helical membrane pass occupies residues 104 to 124; that stretch reads QLFIFTFLGATECFLLAAMAY. Over 125–143 the chain is Cytoplasmic; sequence DRYVAICMPLHYGAFVSWG. Residues 144–164 traverse the membrane as a helical segment; sequence TCIRLAAACWLVGFLTPILPI. Residues 165–201 lie on the Extracellular side of the membrane; the sequence is YLLSQLTFYGPNVIDHFSCDASPLLALSCSDVTWKET. The helical transmembrane segment at 202–221 threads the bilayer; the sequence is VDFLVSLAVLLASSMVIAVS. The Cytoplasmic portion of the chain corresponds to 222-241; sequence YGNIVWTLLHIRSAAERWKA. A helical membrane pass occupies residues 242–262; sequence FSTCAAHLTVVSLFYGTLFFM. The Extracellular portion of the chain corresponds to 263–275; that stretch reads YVQTKVTSSINFN. Residues 276–296 traverse the membrane as a helical segment; the sequence is KVVSVFYSVVTPMLNPLIYSL. The Cytoplasmic segment spans residues 297-317; it reads RNKEVKGALGRVFSLNFWKGQ.

It belongs to the G-protein coupled receptor 1 family.

Its subcellular location is the cell membrane. Its function is as follows. Odorant receptor. The protein is Olfactory receptor 6Q1 (OR6Q1) of Homo sapiens (Human).